A 685-amino-acid chain; its full sequence is Delta-like protein 4 (685 aa).

A signal peptide spans 1-26; it reads MAAASRSASGWALLLLVALWQQRAAG. Over 27-529 the chain is Extracellular; sequence SGVFQLQLQE…PVGLPPSFPW (503 aa). Intrachain disulfides connect cysteine 50/cysteine 54 and cysteine 61/cysteine 74. 2 N-linked (GlcNAc...) asparagine glycosylation sites follow: asparagine 108 and asparagine 183. In terms of domain architecture, DSL spans 173–217; sequence VICSDNYYGDNCSRLCKKRNDHFGHYVCQPDGNLSCLPGWTGEYC. Cysteine 175 and cysteine 184 form a disulfide bridge. 2 interaction with Notch1 regions span residues 185 to 187 and 191 to 195; these read SRL and RNDHF. Cysteines 188 and 200 form a disulfide. N-linked (GlcNAc...) asparagine glycosylation occurs at asparagine 205. Cystine bridges form between cysteine 208–cysteine 217, cysteine 222–cysteine 233, cysteine 226–cysteine 239, cysteine 241–cysteine 250, cysteine 253–cysteine 264, cysteine 259–cysteine 270, cysteine 272–cysteine 281, cysteine 288–cysteine 300, cysteine 294–cysteine 310, cysteine 312–cysteine 321, cysteine 328–cysteine 339, cysteine 333–cysteine 348, cysteine 350–cysteine 359, cysteine 366–cysteine 377, cysteine 371–cysteine 388, cysteine 390–cysteine 399, cysteine 406–cysteine 417, cysteine 411–cysteine 426, cysteine 428–cysteine 437, cysteine 444–cysteine 455, cysteine 449–cysteine 464, cysteine 466–cysteine 475, cysteine 484–cysteine 495, cysteine 489–cysteine 506, and cysteine 508–cysteine 517. EGF-like domains lie at 218–251, 252–282, 284–322, 324–360, 362–400, 402–438, 440–476, and 480–518; these read QQPI…RLCN, ECIP…LFCD, DLNY…VDCE, ELSE…LHCE, STLS…SNCE, KVDR…TYCE, HVSD…RRCE, and SIDA…SRCE. An N-linked (GlcNAc...) asparagine glycan is attached at asparagine 393. A helical membrane pass occupies residues 530–550; that stretch reads VAVSLGVGLAVLLVLLGMVAV. Topologically, residues 551 to 685 are cytoplasmic; that stretch reads AVRQLRLRRP…RNECVIATEV (135 aa).

In terms of assembly, interacts with NOTCH4. Interacts (via N-terminal DSL and MNNL domains) with NOTCH1 (via EGF-like domains). As to expression, expressed in vascular endothelium.

The protein localises to the cell membrane. Its function is as follows. Involved in the Notch signaling pathway as Notch ligand. Activates NOTCH1 and NOTCH4. Involved in angiogenesis; negatively regulates endothelial cell proliferation and migration and angiogenic sprouting. Essential for retinal progenitor proliferation. Required for suppressing rod fates in late retinal progenitors as well as for proper generation of other retinal cell types. During spinal cord neurogenesis, inhibits V2a interneuron fate. The chain is Delta-like protein 4 (DLL4) from Homo sapiens (Human).